We begin with the raw amino-acid sequence, 122 residues long: Large ribosomal subunit protein uL14 (122 aa).

Belongs to the universal ribosomal protein uL14 family. In terms of assembly, part of the 50S ribosomal subunit. Forms a cluster with proteins L3 and L19. In the 70S ribosome, L14 and L19 interact and together make contacts with the 16S rRNA in bridges B5 and B8.

In terms of biological role, binds to 23S rRNA. Forms part of two intersubunit bridges in the 70S ribosome. This Polynucleobacter necessarius subsp. necessarius (strain STIR1) protein is Large ribosomal subunit protein uL14.